The primary structure comprises 653 residues: Glyceraldehyde-3-phosphate:ferredoxin oxidoreductase (653 aa).

Tungstopterin contacts are provided by arginine 70, glycine 89, arginine 196, alanine 197, glycine 199, and arginine 206. Residues cysteine 333 and cysteine 337 each contribute to the [4Fe-4S] cluster site. Aspartate 378, aspartate 383, and aspartate 544 together coordinate tungstopterin. Cysteine 549 is a [4Fe-4S] cluster binding site.

The protein belongs to the AOR/FOR family. Monomer. It depends on [4Fe-4S] cluster as a cofactor. Tungstopterin is required as a cofactor.

It carries out the reaction D-glyceraldehyde 3-phosphate + 2 oxidized [2Fe-2S]-[ferredoxin] + H2O = (2R)-3-phosphoglycerate + 2 reduced [2Fe-2S]-[ferredoxin] + 3 H(+). With respect to regulation, sensitive to oxygen. Activity increased by 58%-93% in the presence of acetyl phosphate, 3-phosphoglycerate or 2,3-bisphosphoglycerate at 10 mM concentration. Inhibited by up to 25% in the presence of crotonaldehyde or formaldehyde at 10 mM concentration. Inhibited by up to 50% by sodium dithionate. 3.5-fold increase in activity observed by addition of potassium phosphate or sodium arsenate at 200 mM concentration. Activity enhanced by potassium chloride, sodium citrate or sodium sulfate at 200 mM concentration. In terms of biological role, catalyzes the oxidation of glyceraldehyde-3-phosphate to 3-phosphoglycerate. Uses ferredoxin as electron acceptor. In vitro can also use benzyl viologen, but not NADP or NAD, as electron acceptor. Probably acts as a glycolytic enzyme in place of glyceraldehyde-3-phosphate dehydrogenase (GAPDH) and phosphoglycerate kinase (PGK) in an unusual Emden-Meyerhof glycolysis. The sequence is that of Glyceraldehyde-3-phosphate:ferredoxin oxidoreductase from Pyrococcus furiosus (strain ATCC 43587 / DSM 3638 / JCM 8422 / Vc1).